The following is a 347-amino-acid chain: Aurora kinase A- and ninein-interacting protein (347 aa).

The interaction with AURKA stretch occupies residues 182 to 347; it reads QREAKRKREG…DSEGNRVIRH (166 aa). Residues 273–347 form an interaction with RBBP8/CtIP region; that stretch reads RDSWSQLFTE…DSEGNRVIRH (75 aa). At S284 the chain carries Phosphoserine. The segment covering 301–322 has biased composition (polar residues); the sequence is VTNARNQGSGQFPDSPQAQGQD. A disordered region spans residues 301–325; that stretch reads VTNARNQGSGQFPDSPQAQGQDGPT.

It belongs to the AUNIP family. Interacts (via C-terminus) with AURKA (via C-terminus). Interacts (via N-terminus) with NIN; this interaction blocks NIN phosphorylation by both AURKA and GSK3B. Identified in a complex with NIN and AURKA. Interacts with RBBP8/CtIP.

It localises to the nucleus. The protein resides in the chromosome. The protein localises to the cytoplasm. Its subcellular location is the cytoskeleton. It is found in the microtubule organizing center. It localises to the centrosome. The protein resides in the spindle pole. In terms of biological role, DNA-binding protein that accumulates at DNA double-strand breaks (DSBs) following DNA damage and promotes DNA resection and homologous recombination. Serves as a sensor of DNA damage: binds DNA with a strong preference for DNA substrates that mimic structures generated at stalled replication forks, and anchors RBBP8/CtIP to DSB sites to promote DNA end resection and ensuing homologous recombination repair. Inhibits non-homologous end joining (NHEJ). Required for the dynamic movement of AURKA at the centrosomes and spindle apparatus during the cell cycle. This is Aurora kinase A- and ninein-interacting protein from Rattus norvegicus (Rat).